Here is a 234-residue protein sequence, read N- to C-terminus: 2-C-methyl-D-erythritol 4-phosphate cytidylyltransferase (234 aa).

Belongs to the IspD/TarI cytidylyltransferase family. IspD subfamily.

The catalysed reaction is 2-C-methyl-D-erythritol 4-phosphate + CTP + H(+) = 4-CDP-2-C-methyl-D-erythritol + diphosphate. Its pathway is isoprenoid biosynthesis; isopentenyl diphosphate biosynthesis via DXP pathway; isopentenyl diphosphate from 1-deoxy-D-xylulose 5-phosphate: step 2/6. Its function is as follows. Catalyzes the formation of 4-diphosphocytidyl-2-C-methyl-D-erythritol from CTP and 2-C-methyl-D-erythritol 4-phosphate (MEP). This chain is 2-C-methyl-D-erythritol 4-phosphate cytidylyltransferase, found in Pseudomonas paraeruginosa (strain DSM 24068 / PA7) (Pseudomonas aeruginosa (strain PA7)).